Reading from the N-terminus, the 565-residue chain is NAD-dependent malic enzyme (565 aa).

Catalysis depends on tyrosine 104, which acts as the Proton donor. Residue arginine 157 participates in NAD(+) binding. Residue lysine 175 is the Proton acceptor of the active site. A divalent metal cation-binding residues include glutamate 246, aspartate 247, and aspartate 270. NAD(+)-binding residues include aspartate 270 and asparagine 418.

It belongs to the malic enzymes family. In terms of assembly, homotetramer. It depends on Mg(2+) as a cofactor. The cofactor is Mn(2+).

It catalyses the reaction (S)-malate + NAD(+) = pyruvate + CO2 + NADH. The catalysed reaction is oxaloacetate + H(+) = pyruvate + CO2. This chain is NAD-dependent malic enzyme, found in Escherichia coli (strain K12 / MC4100 / BW2952).